Here is a 143-residue protein sequence, read N- to C-terminus: Transcriptional regulator MraZ (143 aa).

2 SpoVT-AbrB domains span residues 5–47 (TYTP…SARE) and 76–119 (ASDE…DSES).

Belongs to the MraZ family. In terms of assembly, forms oligomers.

The protein resides in the cytoplasm. Its subcellular location is the nucleoid. In Micrococcus luteus (strain ATCC 4698 / DSM 20030 / JCM 1464 / CCM 169 / CCUG 5858 / IAM 1056 / NBRC 3333 / NCIMB 9278 / NCTC 2665 / VKM Ac-2230) (Micrococcus lysodeikticus), this protein is Transcriptional regulator MraZ.